The sequence spans 572 residues: AAA ATPase forming ring-shaped complexes (572 aa).

The segment at 1-22 is disordered; sequence MTEPRHESGSAAPQRPATDPVQ. A coiled-coil region spans residues 21 to 67; it reads VQRQVNLLRDQKRNLDKQAAALASQNEKLVRLLNASRQEIVGLKKTL. 270–275 contributes to the ATP binding site; it reads GNGKTL. The segment covering 527 to 539 has biased composition (acidic residues); the sequence is HEQQDLPDTEDSE. A disordered region spans residues 527–572; the sequence is HEQQDLPDTEDSEDWARLTGRRGDTIDSVHMASHRPQGEPGPGATP.

Belongs to the AAA ATPase family. As to quaternary structure, homohexamer. Assembles into a hexameric ring structure.

The protein is AAA ATPase forming ring-shaped complexes of Kocuria rhizophila (strain ATCC 9341 / DSM 348 / NBRC 103217 / DC2201).